Consider the following 529-residue polypeptide: Bifunctional purine biosynthesis protein PurH (529 aa).

The region spanning M1–V148 is the MGS-like domain.

This sequence belongs to the PurH family.

It carries out the reaction (6R)-10-formyltetrahydrofolate + 5-amino-1-(5-phospho-beta-D-ribosyl)imidazole-4-carboxamide = 5-formamido-1-(5-phospho-D-ribosyl)imidazole-4-carboxamide + (6S)-5,6,7,8-tetrahydrofolate. The enzyme catalyses IMP + H2O = 5-formamido-1-(5-phospho-D-ribosyl)imidazole-4-carboxamide. It functions in the pathway purine metabolism; IMP biosynthesis via de novo pathway; 5-formamido-1-(5-phospho-D-ribosyl)imidazole-4-carboxamide from 5-amino-1-(5-phospho-D-ribosyl)imidazole-4-carboxamide (10-formyl THF route): step 1/1. The protein operates within purine metabolism; IMP biosynthesis via de novo pathway; IMP from 5-formamido-1-(5-phospho-D-ribosyl)imidazole-4-carboxamide: step 1/1. The polypeptide is Bifunctional purine biosynthesis protein PurH (Salmonella agona (strain SL483)).